The sequence spans 858 residues: Translation initiation factor IF-2 (858 aa).

The disordered stretch occupies residues 59-147; that stretch reads KEHAEKRRER…GKKLEGQERK (89 aa). Residues 361–530 enclose the tr-type G domain; sequence PRPPVVVVMG…LLVADLLELK (170 aa). Residues 370–377 are G1; sequence GHVDHGKT. 370 to 377 provides a ligand contact to GTP; that stretch reads GHVDHGKT. A G2 region spans residues 395–399; that stretch reads GITQH. The interval 416-419 is G3; the sequence is DTPG. Residues 416–420 and 470–473 each bind GTP; these read DTPGH and NKID. The G4 stretch occupies residues 470 to 473; it reads NKID. The G5 stretch occupies residues 506-508; sequence SAK.

It belongs to the TRAFAC class translation factor GTPase superfamily. Classic translation factor GTPase family. IF-2 subfamily.

The protein resides in the cytoplasm. Functionally, one of the essential components for the initiation of protein synthesis. Protects formylmethionyl-tRNA from spontaneous hydrolysis and promotes its binding to the 30S ribosomal subunits. Also involved in the hydrolysis of GTP during the formation of the 70S ribosomal complex. This is Translation initiation factor IF-2 from Caldicellulosiruptor saccharolyticus (strain ATCC 43494 / DSM 8903 / Tp8T 6331).